We begin with the raw amino-acid sequence, 258 residues long: Ubiquinone/menaquinone biosynthesis C-methyltransferase UbiE (258 aa).

The interval 1 to 20 is disordered; that stretch reads MSESRTSADGGMETSYGFRE. Residues Thr-81, Asp-102, and 130 to 131 each bind S-adenosyl-L-methionine; that span reads NA.

The protein belongs to the class I-like SAM-binding methyltransferase superfamily. MenG/UbiE family.

It catalyses the reaction a 2-demethylmenaquinol + S-adenosyl-L-methionine = a menaquinol + S-adenosyl-L-homocysteine + H(+). The catalysed reaction is a 2-methoxy-6-(all-trans-polyprenyl)benzene-1,4-diol + S-adenosyl-L-methionine = a 5-methoxy-2-methyl-3-(all-trans-polyprenyl)benzene-1,4-diol + S-adenosyl-L-homocysteine + H(+). The protein operates within quinol/quinone metabolism; menaquinone biosynthesis; menaquinol from 1,4-dihydroxy-2-naphthoate: step 2/2. It participates in cofactor biosynthesis; ubiquinone biosynthesis. Methyltransferase required for the conversion of demethylmenaquinol (DMKH2) to menaquinol (MKH2) and the conversion of 2-polyprenyl-6-methoxy-1,4-benzoquinol (DDMQH2) to 2-polyprenyl-3-methyl-6-methoxy-1,4-benzoquinol (DMQH2). This Rhizobium etli (strain CIAT 652) protein is Ubiquinone/menaquinone biosynthesis C-methyltransferase UbiE.